Here is a 74-residue protein sequence, read N- to C-terminus: Auswaprin-a (74 aa).

The signal sequence occupies residues 1 to 24 (MSSGGLLLLLGLLTLWGVLTPVSS). Residues 27–71 (RPKKPGLCPPRPQKPCVKECKNDWSCSGQQKCCNYGCIDECRDPI) enclose the WAP domain. 4 disulfide bridges follow: cysteine 34–cysteine 59, cysteine 42–cysteine 63, cysteine 46–cysteine 58, and cysteine 52–cysteine 67.

This sequence belongs to the venom waprin family. Expressed by the venom gland.

The protein localises to the secreted. In terms of biological role, damages membranes of susceptible bacteria. Has no hemolytic activity. Not toxic to mice. Does not inhibit the proteinases elastase and cathepsin G. This is Auswaprin-a from Pseudechis australis (Mulga snake).